Reading from the N-terminus, the 317-residue chain is Ferrochelatase (317 aa).

The Fe cation site is built by histidine 187 and glutamate 268.

This sequence belongs to the ferrochelatase family.

It localises to the cytoplasm. It carries out the reaction heme b + 2 H(+) = protoporphyrin IX + Fe(2+). Its pathway is porphyrin-containing compound metabolism; protoheme biosynthesis; protoheme from protoporphyrin-IX: step 1/1. Functionally, catalyzes the ferrous insertion into protoporphyrin IX. The polypeptide is Ferrochelatase (Campylobacter concisus (strain 13826)).